Consider the following 601-residue polypeptide: DNA ligase (601 aa).

Residue D258 coordinates ATP. K260 functions as the N6-AMP-lysine intermediate in the catalytic mechanism. ATP is bound by residues R265, R280, E310, F350, R427, and K433. The segment at 568–601 is disordered; it reads DKSPEDATTTDEILEMYNKQPKKKIESPPIDESV.

This sequence belongs to the ATP-dependent DNA ligase family. Mg(2+) is required as a cofactor.

It catalyses the reaction ATP + (deoxyribonucleotide)n-3'-hydroxyl + 5'-phospho-(deoxyribonucleotide)m = (deoxyribonucleotide)n+m + AMP + diphosphate.. Its function is as follows. DNA ligase that seals nicks in double-stranded DNA during DNA replication, DNA recombination and DNA repair. In Saccharolobus islandicus (strain L.S.2.15 / Lassen #1) (Sulfolobus islandicus), this protein is DNA ligase.